The following is a 259-amino-acid chain: uncharacterized protein (259 aa).

Residues asparagine 82–glutamine 128 adopt a coiled-coil conformation. The disordered stretch occupies residues leucine 192–serine 259. Over residues lysine 228–threonine 240 the composition is skewed to basic residues. The segment covering serine 241–serine 259 has biased composition (low complexity).

This is an uncharacterized protein from Homo sapiens (Human).